The chain runs to 248 residues: Probable transcriptional regulatory protein HCH_04926 (248 aa).

This sequence belongs to the TACO1 family.

It localises to the cytoplasm. In Hahella chejuensis (strain KCTC 2396), this protein is Probable transcriptional regulatory protein HCH_04926.